Consider the following 97-residue polypeptide: MKLRPLHDRVVIRRSEEESKTAGGIVLPGSAAEKPNRGEVVAVGTGRILENGEVRALAVKVGDKVVFGPYSGSNTVKVDGEDLLVMAENEILAVIEG.

It belongs to the GroES chaperonin family. Heptamer of 7 subunits arranged in a ring. Interacts with the chaperonin GroEL.

The protein resides in the cytoplasm. In terms of biological role, together with the chaperonin GroEL, plays an essential role in assisting protein folding. The GroEL-GroES system forms a nano-cage that allows encapsulation of the non-native substrate proteins and provides a physical environment optimized to promote and accelerate protein folding. GroES binds to the apical surface of the GroEL ring, thereby capping the opening of the GroEL channel. This Pseudomonas putida (strain GB-1) protein is Co-chaperonin GroES.